The chain runs to 254 residues: Type III pantothenate kinase (254 aa).

6 to 13 (DVGNSNIV) contacts ATP. Residues tyrosine 100 and 107–110 (GADR) each bind substrate. Aspartate 109 acts as the Proton acceptor in catalysis. A K(+)-binding site is contributed by aspartate 129. Threonine 132 lines the ATP pocket. Threonine 184 provides a ligand contact to substrate.

Belongs to the type III pantothenate kinase family. Homodimer. NH4(+) serves as cofactor. K(+) is required as a cofactor.

The protein resides in the cytoplasm. It catalyses the reaction (R)-pantothenate + ATP = (R)-4'-phosphopantothenate + ADP + H(+). It functions in the pathway cofactor biosynthesis; coenzyme A biosynthesis; CoA from (R)-pantothenate: step 1/5. Functionally, catalyzes the phosphorylation of pantothenate (Pan), the first step in CoA biosynthesis. In Pelobacter propionicus (strain DSM 2379 / NBRC 103807 / OttBd1), this protein is Type III pantothenate kinase.